Consider the following 200-residue polypeptide: Recombination protein RecR (200 aa).

The C4-type zinc-finger motif lies at 57-72; the sequence is CSECRTFTEEDTCAIC. In terms of domain architecture, Toprim spans 81 to 176; it reads GEMCIVESPA…PASRIAHGVP (96 aa).

The protein belongs to the RecR family.

Functionally, may play a role in DNA repair. It seems to be involved in an RecBC-independent recombinational process of DNA repair. It may act with RecF and RecO. The sequence is that of Recombination protein RecR from Aliivibrio fischeri (strain ATCC 700601 / ES114) (Vibrio fischeri).